A 363-amino-acid chain; its full sequence is Peptide chain release factor 2 (363 aa).

Glutamine 251 carries the post-translational modification N5-methylglutamine.

The protein belongs to the prokaryotic/mitochondrial release factor family. Post-translationally, methylated by PrmC. Methylation increases the termination efficiency of RF2.

It is found in the cytoplasm. Peptide chain release factor 2 directs the termination of translation in response to the peptide chain termination codons UGA and UAA. This Helicobacter pylori (strain G27) protein is Peptide chain release factor 2.